The following is a 465-amino-acid chain: MLSAALRLTAKRNVRSLATASSSSYPGALLNVPKTQVTRLPNGLTVATESNPALATATVGVWIDSGSRAETKANNGVAHFLEHISFKGTKQRTQSGLEIEIENMGGHLNAYTSREQTVYYAKLFSQDVAKGVNILGDILQNSTLDPGAIDRERAVILREAEEVDKQVEEVVFDHLHAAAFPENALGYTILGPKENIQTLSQADLQAYIKNNYTADRMVVVGAGNVDHAELCKLAETNFGKLPQGSGKAKFVRPAFTGSDVRIRVDDMPTAHIALAVEGASWTSADHWPLLVASAMIGSYDRAAGNAHPSSKLAQIVAKHNLANSFTSFNTTYSDTGLWGIYIQSNNRDNLDDLAHFTVREWMRLATAPSEGEVAIAKQQLKTSLLLALDGTTPVAEEIGRQMLAYGRRLSPFEIDRLVDAVTVEDVKRVANEFIYDRDLAIVAVGPVECLPDYNRIRSAMNLLRY.

H79 contacts Zn(2+). E82 acts as the Proton acceptor in catalysis. Residues H83 and E159 each coordinate Zn(2+).

The protein belongs to the peptidase M16 family. Heterodimer of an alpha subunit and a beta subunit subunits, forming the mitochondrial processing protease (MPP) in which the alpha subunit is involved in substrate recognition and binding and the beta subunit is the catalytic subunit. The cofactor is Zn(2+).

It localises to the mitochondrion matrix. The enzyme catalyses Release of N-terminal transit peptides from precursor proteins imported into the mitochondrion, typically with Arg in position P2.. Its activity is regulated as follows. Binding to the alpha subunit is required for catalytic activity. Its function is as follows. Catalytic subunit of the essential mitochondrial processing protease (MPP), which cleaves the mitochondrial sequence off newly imported precursors proteins. Preferentially, cleaves after an arginine at position P2. This chain is Mitochondrial-processing peptidase subunit beta (MPP1), found in Blastocladiella emersonii (Aquatic fungus).